Here is a 337-residue protein sequence, read N- to C-terminus: tRNA-cytidine(32) 2-sulfurtransferase (337 aa).

Residues 71–76 (SGGKDS) carry the PP-loop motif motif. [4Fe-4S] cluster is bound by residues Cys146, Cys149, and Cys237.

The protein belongs to the TtcA family. As to quaternary structure, homodimer. The cofactor is Mg(2+). [4Fe-4S] cluster serves as cofactor.

It localises to the cytoplasm. It carries out the reaction cytidine(32) in tRNA + S-sulfanyl-L-cysteinyl-[cysteine desulfurase] + AH2 + ATP = 2-thiocytidine(32) in tRNA + L-cysteinyl-[cysteine desulfurase] + A + AMP + diphosphate + H(+). It participates in tRNA modification. Its function is as follows. Catalyzes the ATP-dependent 2-thiolation of cytidine in position 32 of tRNA, to form 2-thiocytidine (s(2)C32). The sulfur atoms are provided by the cysteine/cysteine desulfurase (IscS) system. The protein is tRNA-cytidine(32) 2-sulfurtransferase of Burkholderia vietnamiensis (strain G4 / LMG 22486) (Burkholderia cepacia (strain R1808)).